We begin with the raw amino-acid sequence, 351 residues long: Probable E3 ubiquitin-protein ligase sinah (351 aa).

The disordered stretch occupies residues 1-38 (MSVRNSRPQLSWPERVSPQRTIDTPTASGEMLTRRQSA). Polar residues predominate over residues 18–27 (PQRTIDTPTA). The RING-type zinc finger occupies 106–141 (CPVCFGYIMPPIMQCPRGHLICSTCRSKLTICPVCR). Residues 155–346 (VASKLIFPCK…LALNVVIRKV (192 aa)) form an SBD region. Residues 158 to 218 (KLIFPCKHSH…VYQHLMSSHE (61 aa)) form an SIAH-type zinc finger. Residues cysteine 163, cysteine 170, histidine 182, cysteine 186, cysteine 193, cysteine 200, histidine 212, and histidine 217 each coordinate Zn(2+).

It belongs to the SINA (Seven in absentia) family. As to quaternary structure, interacts with ebi and phyl.

It carries out the reaction S-ubiquitinyl-[E2 ubiquitin-conjugating enzyme]-L-cysteine + [acceptor protein]-L-lysine = [E2 ubiquitin-conjugating enzyme]-L-cysteine + N(6)-ubiquitinyl-[acceptor protein]-L-lysine.. It participates in protein modification; protein ubiquitination. Functionally, E3 ubiquitin-protein ligase that mediates ubiquitination and subsequent proteasomal degradation of target proteins. The adapter phyl is required to direct the degradation of the two isoforms of the transcriptional repressor Tramtrack (Ttk). E3 ubiquitin ligases accept ubiquitin from an E2 ubiquitin-conjugating enzyme in the form of a thioester and then directly transfers the ubiquitin to targeted substrates. It probably triggers the ubiquitin-mediated degradation of different substrates. A phyl-independent mechanism of degradation exists for isoform beta of ttk that involves motifs in the C-terminus of ttk. In Drosophila melanogaster (Fruit fly), this protein is Probable E3 ubiquitin-protein ligase sinah (sinah).